Consider the following 337-residue polypeptide: Diacylglycerol O-acyltransferase 2-like protein 6 (337 aa).

A run of 2 helical transmembrane segments spans residues I22–F42 and Y102–T122.

This sequence belongs to the diacylglycerol acyltransferase family.

Its subcellular location is the endoplasmic reticulum membrane. The enzyme catalyses 1,2-di-(9Z-octadecenoyl)-sn-glycerol + (9Z)-octadecenoyl-CoA = 1,2,3-tri-(9Z-octadecenoyl)-glycerol + CoA. In terms of biological role, diglyceride acyltransferase that uses fatty acyl-CoA as substrate. Particularly active with oleate as a substrate. Has no wax synthase activity to produce wax esters. The chain is Diacylglycerol O-acyltransferase 2-like protein 6 (Dgat2l6) from Mus musculus (Mouse).